A 137-amino-acid chain; its full sequence is Ribosome-binding factor A (137 aa).

The protein belongs to the RbfA family. As to quaternary structure, monomer. Binds 30S ribosomal subunits, but not 50S ribosomal subunits or 70S ribosomes.

The protein localises to the cytoplasm. In terms of biological role, one of several proteins that assist in the late maturation steps of the functional core of the 30S ribosomal subunit. Associates with free 30S ribosomal subunits (but not with 30S subunits that are part of 70S ribosomes or polysomes). Required for efficient processing of 16S rRNA. May interact with the 5'-terminal helix region of 16S rRNA. The protein is Ribosome-binding factor A of Rhodopseudomonas palustris (strain BisB18).